The chain runs to 127 residues: Aspartate 1-decarboxylase (127 aa).

The active-site Schiff-base intermediate with substrate; via pyruvic acid is the Ser-25. Ser-25 bears the Pyruvic acid (Ser) mark. Residue Thr-57 coordinates substrate. Tyr-58 serves as the catalytic Proton donor. Position 73-75 (Gly-73–Ala-75) interacts with substrate.

Belongs to the PanD family. Heterooctamer of four alpha and four beta subunits. The cofactor is pyruvate. Post-translationally, is synthesized initially as an inactive proenzyme, which is activated by self-cleavage at a specific serine bond to produce a beta-subunit with a hydroxyl group at its C-terminus and an alpha-subunit with a pyruvoyl group at its N-terminus.

The protein localises to the cytoplasm. The enzyme catalyses L-aspartate + H(+) = beta-alanine + CO2. It participates in cofactor biosynthesis; (R)-pantothenate biosynthesis; beta-alanine from L-aspartate: step 1/1. Its function is as follows. Catalyzes the pyruvoyl-dependent decarboxylation of aspartate to produce beta-alanine. In Neisseria meningitidis serogroup B (strain ATCC BAA-335 / MC58), this protein is Aspartate 1-decarboxylase.